The following is a 262-amino-acid chain: Cytochrome c oxidase subunit 3 (262 aa).

6 helical membrane-spanning segments follow: residues 39–59 (YTMTLFILGNIITILTMYQWW), 83–103 (GMILFIVSEIFFFISFFWAFF), 120–140 (VGIIAFNPFQIPLLNTAILLA), 163–183 (GLFFTIVLGIYFSILQAYEYI), 201–221 (ATGFHGLHVLIGTTFLLICFL), and 240–260 (AWYWHFVDVVWLFLYISIYWW).

It belongs to the cytochrome c oxidase subunit 3 family. Component of the cytochrome c oxidase (complex IV, CIV), a multisubunit enzyme composed of a catalytic core of 3 subunits and several supernumerary subunits. The complex exists as a monomer or a dimer and forms supercomplexes (SCs) in the inner mitochondrial membrane with ubiquinol-cytochrome c oxidoreductase (cytochrome b-c1 complex, complex III, CIII).

It localises to the mitochondrion inner membrane. It carries out the reaction 4 Fe(II)-[cytochrome c] + O2 + 8 H(+)(in) = 4 Fe(III)-[cytochrome c] + 2 H2O + 4 H(+)(out). Component of the cytochrome c oxidase, the last enzyme in the mitochondrial electron transport chain which drives oxidative phosphorylation. The respiratory chain contains 3 multisubunit complexes succinate dehydrogenase (complex II, CII), ubiquinol-cytochrome c oxidoreductase (cytochrome b-c1 complex, complex III, CIII) and cytochrome c oxidase (complex IV, CIV), that cooperate to transfer electrons derived from NADH and succinate to molecular oxygen, creating an electrochemical gradient over the inner membrane that drives transmembrane transport and the ATP synthase. Cytochrome c oxidase is the component of the respiratory chain that catalyzes the reduction of oxygen to water. Electrons originating from reduced cytochrome c in the intermembrane space (IMS) are transferred via the dinuclear copper A center (CU(A)) of subunit 2 and heme A of subunit 1 to the active site in subunit 1, a binuclear center (BNC) formed by heme A3 and copper B (CU(B)). The BNC reduces molecular oxygen to 2 water molecules using 4 electrons from cytochrome c in the IMS and 4 protons from the mitochondrial matrix. In Anopheles quadrimaculatus (Common malaria mosquito), this protein is Cytochrome c oxidase subunit 3 (COIII).